Reading from the N-terminus, the 301-residue chain is MNDFLVFSEEVAQAKAEKKPIVALESTIISHGMPYPENVQTAKDVERIIRDRGAVPATIAIFNEKIKIGLTEGELEQLGTSHDVEKVSRRDLPYVVAMKKHGATTVAGTMICAEMAGIRVFATGGIGGVHRGAEQTMDISADLQELARTNVAVVCAGAKSILDLGLTLEYLETHGVPVIGYQTDVLPAFYSRTSPFRVDYRLDSAKEIAQFLETKWKLGLNGGVVIANPVPKEEELEESYITAIIEQALKEAEKQHITGKSVTPFLLDRVKTLTGGKSLQANIALVKNNAALAADLARELS.

Glutamate 25 acts as the Proton donor in catalysis. 2 residues coordinate substrate: lysine 86 and valine 106. Mn(2+) is bound at residue aspartate 138. Residue 140 to 142 participates in substrate binding; it reads SAD. The Nucleophile role is filled by lysine 159.

Belongs to the pseudouridine-5'-phosphate glycosidase family. As to quaternary structure, homotrimer. Mn(2+) serves as cofactor.

The enzyme catalyses D-ribose 5-phosphate + uracil = psi-UMP + H2O. In terms of biological role, catalyzes the reversible cleavage of pseudouridine 5'-phosphate (PsiMP) to ribose 5-phosphate and uracil. Functions biologically in the cleavage direction, as part of a pseudouridine degradation pathway. In Geobacillus kaustophilus (strain HTA426), this protein is Pseudouridine-5'-phosphate glycosidase.